The chain runs to 261 residues: Single-strand annealing weakened protein 1 (261 aa).

Interacts with MSH2, MSH3, RAD1, RAD10, RAD51 and RAD52.

It is found in the nucleus. In terms of biological role, catalyzes 3'-non-homologous tail removal of RAD1/RAD10-dependent single-strand annealing recombination intermediates. Plays a key role in targeting RAD1/RAD10 complex to 3'-flap cleavage substrate in recombination. Also contributes to the integrity of ribosomal DNA arrays. This chain is Single-strand annealing weakened protein 1 (SAW1), found in Saccharomyces cerevisiae (strain ATCC 204508 / S288c) (Baker's yeast).